We begin with the raw amino-acid sequence, 200 residues long: Crossover junction endodeoxyribonuclease RuvC (200 aa).

Active-site residues include Asp-18, Glu-78, and Asp-151. Positions 18, 78, and 151 each coordinate Mg(2+).

Belongs to the RuvC family. In terms of assembly, homodimer which binds Holliday junction (HJ) DNA. The HJ becomes 2-fold symmetrical on binding to RuvC with unstacked arms; it has a different conformation from HJ DNA in complex with RuvA. In the full resolvosome a probable DNA-RuvA(4)-RuvB(12)-RuvC(2) complex forms which resolves the HJ. Mg(2+) is required as a cofactor.

The protein localises to the cytoplasm. It catalyses the reaction Endonucleolytic cleavage at a junction such as a reciprocal single-stranded crossover between two homologous DNA duplexes (Holliday junction).. Functionally, the RuvA-RuvB-RuvC complex processes Holliday junction (HJ) DNA during genetic recombination and DNA repair. Endonuclease that resolves HJ intermediates. Cleaves cruciform DNA by making single-stranded nicks across the HJ at symmetrical positions within the homologous arms, yielding a 5'-phosphate and a 3'-hydroxyl group; requires a central core of homology in the junction. The consensus cleavage sequence is 5'-(A/T)TT(C/G)-3'. Cleavage occurs on the 3'-side of the TT dinucleotide at the point of strand exchange. HJ branch migration catalyzed by RuvA-RuvB allows RuvC to scan DNA until it finds its consensus sequence, where it cleaves and resolves the cruciform DNA. In Cytophaga hutchinsonii (strain ATCC 33406 / DSM 1761 / CIP 103989 / NBRC 15051 / NCIMB 9469 / D465), this protein is Crossover junction endodeoxyribonuclease RuvC.